We begin with the raw amino-acid sequence, 1226 residues long: Stress response protein nst1 (1226 aa).

Disordered stretches follow at residues 1–225 (MKGN…QEER), 294–388 (ANHP…FNFG), 423–491 (RMAR…RMEE), 526–727 (EELA…KRPA), 757–876 (TPAF…FSNH), and 944–1001 (GKDN…TDQA). Residues 45-59 (PADSAQPSPTITTAA) are compositionally biased toward polar residues. The span at 89-99 (NKKKAKRRQKA) shows a compositional bias: basic residues. Over residues 113–130 (APSNGFPSPSPSHAQQST) the composition is skewed to polar residues. The segment covering 131 to 152 (EADHDDSHDEHLEEFNNRRDSR) has biased composition (basic and acidic residues). Positions 170–180 (KKSKKKKKKSH) are enriched in basic residues. Basic and acidic residues predominate over residues 211 to 225 (ISKEKIWNTSSQEER). Polar residues predominate over residues 326–335 (SYPSHHQPSH). Residues 343–372 (AEEDDEEEEVEEEYSEDEQDEDDYSDDEPS) are compositionally biased toward acidic residues. 2 stretches are compositionally biased toward basic and acidic residues: residues 423–432 (RMAREEDARD) and 442–453 (AGDRNAHYHPPA). Residues 454 to 484 (DDEVDDEEYDEDYDDDEEEEYDSQDEEETMT) are compositionally biased toward acidic residues. Positions 517-708 (ARERQNMLLE…SKQEDRAAQK (192 aa)) form a coiled coil. Composition is skewed to basic and acidic residues over residues 530–548 (DEKR…EAQK) and 556–706 (KKEL…DRAA). Low complexity-rich tracts occupy residues 707–716 (QKAAALATTA) and 777–790 (SVTT…QPGS). Polar residues-rich tracts occupy residues 791 to 805 (AVSQ…TPIL) and 822 to 852 (SGTQ…SQAN).

It belongs to the NST1 family.

It localises to the cytoplasm. May act as a negative regulator of salt tolerance. In Neurospora crassa (strain ATCC 24698 / 74-OR23-1A / CBS 708.71 / DSM 1257 / FGSC 987), this protein is Stress response protein nst1 (nst1).